Consider the following 126-residue polypeptide: MPNTYGSRTLTEWLTLVLGVVIILVGLFFVIAGADLAMLGGSVYYVICGIPLVAGGVFMLMGRTLGAFLYLGALAYTWVWSLWEVGFSPVDLLPRDFGPTLLGILVALTIPVLRRMETRRTLRGTV.

The next 4 helical transmembrane spans lie at 13–33, 41–61, 67–87, and 92–112; these read WLTL…VIAG, GSVY…FMLM, AFLY…EVGF, and LLPR…TIPV.

The protein resides in the cell membrane. It carries out the reaction glycerol + A = dihydroxyacetone + AH2. Its function is as follows. Catalyzes the oxidation of glycerol to glycerone. Also acts, more slowly, on a number of other polyols including D-sorbitol, D-arabinitol, D-mannitol, meso-erythritol, adonitol and propylene glycol. This Gluconobacter oxydans (strain 621H) (Gluconobacter suboxydans) protein is Glycerol dehydrogenase small subunit (sldB).